The following is a 165-amino-acid chain: RNA pyrophosphohydrolase (165 aa).

Residues 13-154 form the Nudix hydrolase domain; the sequence is PYRQGVGIML…KRPVYEQVVA (142 aa). The Nudix box motif lies at 46–67; it reads GGIDAGEDPETAAWREMEEEIG.

It belongs to the Nudix hydrolase family. RppH subfamily. Requires a divalent metal cation as cofactor.

Accelerates the degradation of transcripts by removing pyrophosphate from the 5'-end of triphosphorylated RNA, leading to a more labile monophosphorylated state that can stimulate subsequent ribonuclease cleavage. This chain is RNA pyrophosphohydrolase, found in Rhodospirillum rubrum (strain ATCC 11170 / ATH 1.1.1 / DSM 467 / LMG 4362 / NCIMB 8255 / S1).